The primary structure comprises 279 residues: NADPH-dependent 7-cyano-7-deazaguanine reductase (279 aa).

Residue 86 to 88 (VES) coordinates substrate. Position 88 to 89 (88 to 89 (SK)) interacts with NADPH. The Thioimide intermediate role is filled by cysteine 187. Aspartate 194 serves as the catalytic Proton donor. Position 226-227 (226-227 (HE)) interacts with substrate. An NADPH-binding site is contributed by 255 to 256 (RG).

It belongs to the GTP cyclohydrolase I family. QueF type 2 subfamily. In terms of assembly, homodimer.

It is found in the cytoplasm. It catalyses the reaction 7-aminomethyl-7-carbaguanine + 2 NADP(+) = 7-cyano-7-deazaguanine + 2 NADPH + 3 H(+). It functions in the pathway tRNA modification; tRNA-queuosine biosynthesis. In terms of biological role, catalyzes the NADPH-dependent reduction of 7-cyano-7-deazaguanine (preQ0) to 7-aminomethyl-7-deazaguanine (preQ1). The protein is NADPH-dependent 7-cyano-7-deazaguanine reductase of Actinobacillus succinogenes (strain ATCC 55618 / DSM 22257 / CCUG 43843 / 130Z).